A 409-amino-acid chain; its full sequence is Sprouty-related, EVH1 domain-containing protein 2 (409 aa).

In terms of domain architecture, WH1 spans 5–121 (APPEDDSYIV…RGVRKAIEDL (117 aa)). A disordered region spans residues 121–170 (LTEGSTTSSSTIHNEAELGDDDVFATSTDSSSNSSQKREPPVRTIASPLP). Polar residues predominate over residues 123–133 (EGSTTSSSTIH). Residues 146 to 155 (TSTDSSSNSS) are compositionally biased toward low complexity. Residues 199–253 (PHRHVSFPDDDDEIVRINPRERNWLTGYEDYRQAPIHRKYPDTESIDSYVRFAKS) enclose the KBD domain. The region spanning 299-407 (RCIYCRDMFN…CGCCGGKHKA (109 aa)) is the SPR domain.

Its subcellular location is the cell membrane. The protein localises to the cytoplasmic vesicle. It is found in the secretory vesicle membrane. The protein resides in the cytoplasm. Its function is as follows. Negatively regulates Ras signaling pathways and downstream activation of MAP kinases. The polypeptide is Sprouty-related, EVH1 domain-containing protein 2 (spred2) (Xenopus tropicalis (Western clawed frog)).